Consider the following 411-residue polypeptide: ACT domain-containing protein ACR9 (411 aa).

3 consecutive ACT domains span residues 22–105, 111–194, and 243–322; these read VVTV…NVSK, LLKF…LAGP, and LLQI…VIIV.

In terms of biological role, may bind amino acids. This Arabidopsis thaliana (Mouse-ear cress) protein is ACT domain-containing protein ACR9.